Reading from the N-terminus, the 201-residue chain is MKLYYKVGACSLAPHIILSEAGLPYELEAVDLKAKKTADGGDYFAVNPRGAVPALEVKPGTVITQNAAILQYIGDHSDVAAFKPAYGSIERARLQEALGFCSDLHAAFSGLFAPNLSEEARAGVIANINRRLGQLEAMLSDKNAYWLGDDFTQPDAYASVIIGWGVGQKLDLSAYPKALKLRERVLARPNVQKAFKEEGLN.

Residues 1–81 (MKLYYKVGAC…YIGDHSDVAA (81 aa)) enclose the GST N-terminal domain. Glutathione is bound by residues C10, K35, V52, 65 to 66 (QN), and 102 to 105 (SDLH). Residues 87-201 (GSIERARLQE…QKAFKEEGLN (115 aa)) form the GST C-terminal domain.

This sequence belongs to the GST superfamily. Beta family. As to quaternary structure, homodimer.

The protein resides in the cytoplasm. The catalysed reaction is RX + glutathione = an S-substituted glutathione + a halide anion + H(+). Conjugation of reduced glutathione to a wide number of exogenous and endogenous hydrophobic electrophiles. The chain is Glutathione S-transferase (gst) from Brucella anthropi (Ochrobactrum anthropi).